The primary structure comprises 116 residues: uncharacterized protein (116 aa).

A helical membrane pass occupies residues 89 to 109; that stretch reads VGFVILILLYILTNPNAIELI.

Belongs to the M.jannaschii MJ0023/MJ0349/MJ1072/MJ1074/MJ1107/MJECL16 family.

It localises to the membrane. This is an uncharacterized protein from Methanocaldococcus jannaschii (strain ATCC 43067 / DSM 2661 / JAL-1 / JCM 10045 / NBRC 100440) (Methanococcus jannaschii).